Reading from the N-terminus, the 197-residue chain is MKVKMSKLIILSGPSGVGKGTIESLLLKNKNLLIKLAISATTREKRRDEINGVNYFFLTVQEFKEKIENDEFIEWSCHFNNYYGTLKSQIKFIQSQNFIPLLEIDTTGAKNIIENYKNKGELSQLLTIFILPPSIESLKNRIQKRLTETNIQINQRLEKAKAEIKVKNLFKFQVVNDNLEKCVAQIEKIISKEIQKT.

The 186-residue stretch at S6–S191 folds into the Guanylate kinase-like domain. ATP is bound at residue G13–G20.

It belongs to the guanylate kinase family.

The protein resides in the cytoplasm. The catalysed reaction is GMP + ATP = GDP + ADP. Essential for recycling GMP and indirectly, cGMP. This Mesomycoplasma hyopneumoniae (strain 7448) (Mycoplasma hyopneumoniae) protein is Guanylate kinase.